The primary structure comprises 234 residues: 2,3,4,5-tetrahydropyridine-2,6-dicarboxylate N-acetyltransferase (234 aa).

It belongs to the transferase hexapeptide repeat family. DapH subfamily.

It catalyses the reaction (S)-2,3,4,5-tetrahydrodipicolinate + acetyl-CoA + H2O = L-2-acetamido-6-oxoheptanedioate + CoA. It functions in the pathway amino-acid biosynthesis; L-lysine biosynthesis via DAP pathway; LL-2,6-diaminopimelate from (S)-tetrahydrodipicolinate (acetylase route): step 1/3. Functionally, catalyzes the transfer of an acetyl group from acetyl-CoA to tetrahydrodipicolinate. The chain is 2,3,4,5-tetrahydropyridine-2,6-dicarboxylate N-acetyltransferase from Leuconostoc citreum (strain KM20).